An 83-amino-acid polypeptide reads, in one-letter code: Exodeoxyribonuclease 7 small subunit (83 aa).

Belongs to the XseB family. In terms of assembly, heterooligomer composed of large and small subunits.

It localises to the cytoplasm. It catalyses the reaction Exonucleolytic cleavage in either 5'- to 3'- or 3'- to 5'-direction to yield nucleoside 5'-phosphates.. Its function is as follows. Bidirectionally degrades single-stranded DNA into large acid-insoluble oligonucleotides, which are then degraded further into small acid-soluble oligonucleotides. The polypeptide is Exodeoxyribonuclease 7 small subunit (Bradyrhizobium sp. (strain BTAi1 / ATCC BAA-1182)).